The chain runs to 267 residues: 5'-nucleotidase SurE (267 aa).

A divalent metal cation contacts are provided by D9, D10, S40, and N97.

This sequence belongs to the SurE nucleotidase family. A divalent metal cation is required as a cofactor.

It localises to the cytoplasm. It carries out the reaction a ribonucleoside 5'-phosphate + H2O = a ribonucleoside + phosphate. In terms of biological role, nucleotidase that shows phosphatase activity on nucleoside 5'-monophosphates. The chain is 5'-nucleotidase SurE from Helicobacter pylori (strain J99 / ATCC 700824) (Campylobacter pylori J99).